We begin with the raw amino-acid sequence, 236 residues long: UPF0502 protein BamMC406_5439 (236 aa).

It belongs to the UPF0502 family.

In Burkholderia ambifaria (strain MC40-6), this protein is UPF0502 protein BamMC406_5439.